We begin with the raw amino-acid sequence, 182 residues long: Glutathione-regulated potassium-efflux system ancillary protein KefG (182 aa).

Belongs to the NAD(P)H dehydrogenase (quinone) family. KefG subfamily. In terms of assembly, interacts with KefB.

It is found in the cell inner membrane. The catalysed reaction is a quinone + NADH + H(+) = a quinol + NAD(+). The enzyme catalyses a quinone + NADPH + H(+) = a quinol + NADP(+). Functionally, regulatory subunit of a potassium efflux system that confers protection against electrophiles. Required for full activity of KefB. The sequence is that of Glutathione-regulated potassium-efflux system ancillary protein KefG from Yersinia pseudotuberculosis serotype O:1b (strain IP 31758).